A 176-amino-acid chain; its full sequence is Prepronociceptin (176 aa).

The signal sequence occupies residues 1–19 (MKVLLCDLLLLSLFSSVFS). 2 consecutive propeptides follow at residues 20–95 (SCQR…MQHL) and 169–176 (TLHQNGNV).

This sequence belongs to the opioid neuropeptide precursor family. Post-translationally, specific enzymatic cleavages at paired basic residues probably yield other active peptides besides nociceptin. In terms of processing, the N-terminal domain contains 6 conserved cysteines thought to be involved in disulfide bonding and/or processing. Predominantly expressed in the brain and spinal cord. Also expressed and secreted by peripheral blood neutrophils following degranulation.

The protein resides in the secreted. Functionally, ligand of the opioid receptor-like receptor OPRL1. It may act as a transmitter in the brain by modulating nociceptive and locomotor behavior. May be involved in neuronal differentiation and development. In terms of biological role, blocks nociceptin action in pain transmission by inhibiting nociceptin-induced hyperalgesia and allodynia. Has potent analgesic activity. This is Prepronociceptin (PNOC) from Homo sapiens (Human).